A 171-amino-acid polypeptide reads, in one-letter code: Bursicon (171 aa).

Positions 1–31 (MISSPSTPATFAAGSLVLLCLVLGGGHFALA) are cleaved as a signal peptide. Intrachain disulfides connect C47–C96, C61–C110, C71–C131, C75–C133, and C93–C136. In terms of domain architecture, CTCK spans 47-137 (CQVTPVIHVL…PLECMCRPCT (91 aa)).

As to quaternary structure, heterodimer of burs and pburs.

The protein localises to the secreted. Its function is as follows. Final heterodimeric neurohormone released at the end of the molting cycle, involved in the sclerotization (tanning) of the insect cuticle, melanization and wing spreading. This Culex pipiens pipiens (Northern house mosquito) protein is Bursicon.